Reading from the N-terminus, the 167-residue chain is GTP-dependent dephospho-CoA kinase (167 aa).

Residues Asp39, Val41, Asp58, Lys60, and Glu117 each contribute to the GTP site.

It belongs to the GTP-dependent DPCK family.

The enzyme catalyses 3'-dephospho-CoA + GTP = GDP + CoA + H(+). It participates in cofactor biosynthesis; coenzyme A biosynthesis. Catalyzes the GTP-dependent phosphorylation of the 3'-hydroxyl group of dephosphocoenzyme A to form coenzyme A (CoA). The protein is GTP-dependent dephospho-CoA kinase of Korarchaeum cryptofilum (strain OPF8).